The primary structure comprises 205 residues: Imidazole glycerol phosphate synthase subunit HisH (205 aa).

The Glutamine amidotransferase type-1 domain maps to 1–205; the sequence is MVGIVNYNIG…RILKNFCEIG (205 aa). Cysteine 79 acts as the Nucleophile in catalysis. Residues histidine 186 and glutamate 188 contribute to the active site.

In terms of assembly, heterodimer of HisH and HisF.

The protein resides in the cytoplasm. It catalyses the reaction 5-[(5-phospho-1-deoxy-D-ribulos-1-ylimino)methylamino]-1-(5-phospho-beta-D-ribosyl)imidazole-4-carboxamide + L-glutamine = D-erythro-1-(imidazol-4-yl)glycerol 3-phosphate + 5-amino-1-(5-phospho-beta-D-ribosyl)imidazole-4-carboxamide + L-glutamate + H(+). It carries out the reaction L-glutamine + H2O = L-glutamate + NH4(+). The protein operates within amino-acid biosynthesis; L-histidine biosynthesis; L-histidine from 5-phospho-alpha-D-ribose 1-diphosphate: step 5/9. Functionally, IGPS catalyzes the conversion of PRFAR and glutamine to IGP, AICAR and glutamate. The HisH subunit catalyzes the hydrolysis of glutamine to glutamate and ammonia as part of the synthesis of IGP and AICAR. The resulting ammonia molecule is channeled to the active site of HisF. This Wolinella succinogenes (strain ATCC 29543 / DSM 1740 / CCUG 13145 / JCM 31913 / LMG 7466 / NCTC 11488 / FDC 602W) (Vibrio succinogenes) protein is Imidazole glycerol phosphate synthase subunit HisH.